Here is an 826-residue protein sequence, read N- to C-terminus: MADAYCLTNFIDFSLSLSLPLKHHNRIKYTCFDISDSYIIFGASSGSLYLFNRNGKFLLLIPNKHGAITSLSISANSKYVAFATQRSLICVYAVNLSAQATPQVIFTHLDQSVQVTCIHWTQDEKQFYYGDSRGQVSLVLLSSFIGHSLLFNMTVHPLLYLDSPIVQIDDFEYLLLVSNCTKCILCNTEYEDYKQIGNRPRDGAFGACFFVSPQESLQPSRIYCARPGSRVWEVDFEGEVIQTHQFKTALATAPARIQRPGSGTDELDANAELLDYQPQNLQFAKVQRLNDDFLLAFTELGLYIFDIRRSAVVLWSNQFERIADCRSSGSEIFVFTQSGALYSVQLQTLQSHAVSLIQQSKLLPCANLLRQHVRYFADKAREDYELKQLNPLKQLLIERQEYELLNDISVIFDAITQCTGSALDTHSSGGSSATTERSLSGGSSSRAPPKGVYVLENAFCDNLKQPLKTGHFKDALLTVTGKFGKNIIKYKFNIFAEEQQQLVRELIPASERSLPFKDIKARYESGSEDQEEEIVRRCKKPAPQVPHISPEEKTLYNLYLIAKSAKFSRTQCVDRYRAVFDEYAAGELVNLLEKLAQVMVEHGDTPDQAQRNCYEMYFDYLDPEMIWEVDDATRDHIAAGFVLLNTSQNAEIVKCEHCSFPLRFDTSCQYHELGAVLLRYFWSRGEQLKCFDVVQSVPALLDVLAKFYLAEQNLTKVVAIVLNYGLPELLADVGKQLSVSAWGRCFEQFVELQRGGRLVCANCECISGVEQEQLGRHFFYNWNCFLNIALDHMSAGDTLALIFKWSSYIPNDAIDREFYSRCLLKG.

WD repeat units lie at residues 22-61 (KHHN…LLLI), 63-102 (NKHG…QATP), and 110-149 (DQSV…GHSL). Polar residues predominate over residues 422 to 446 (ALDTHSSGGSSATTERSLSGGSSSR). The disordered stretch occupies residues 422–447 (ALDTHSSGGSSATTERSLSGGSSSRA).

The protein belongs to the HPS5 family. Expressed in eye pigment granules.

Functionally, has a role in the biogenesis of eye pigment granules. Eye pigment granules are specialized forms of late endosomes or lysosomes. Biogenesis of pigment granules in the eye requires molecular components required for protein delivery to lysosomes. This is BLOC-2 complex member HPS5 homolog from Drosophila melanogaster (Fruit fly).